The primary structure comprises 81 residues: METRALWLMLLVVLVAGSSGIAADYVGLSPSQCMVPANVRVDCGYPSVTSEQCNNRGCCFDSSIPNVPWCFKPLQETECTF.

The first 22 residues, 1–22 (METRALWLMLLVVLVAGSSGIA), serve as a signal peptide directing secretion. The P-type domain maps to 31 to 74 (SQCMVPANVRVDCGYPSVTSEQCNNRGCCFDSSIPNVPWCFKPL). 3 cysteine pairs are disulfide-bonded: C33-C59, C43-C58, and C53-C70.

As to quaternary structure, monomer. Homodimer; disulfide-linked. Expressed in goblet cells of the intestines and colon (at protein level). Expressed abundantly in goblet cells of intestine and colon, and at low levels in stomach. No expression in brain, lung, spleen, kidney, uterus, pancreas, liver, heart or thymus.

It localises to the secreted. The protein resides in the extracellular space. It is found in the extracellular matrix. Its subcellular location is the cytoplasm. Involved in the maintenance and repair of the intestinal mucosa. Promotes the mobility of epithelial cells in healing processes (motogen). The sequence is that of Trefoil factor 3 (Tff3) from Mus musculus (Mouse).